A 240-amino-acid polypeptide reads, in one-letter code: Large ribosomal subunit protein bL25 (240 aa).

2 disordered regions span residues 1–21 (MAENVLSAQKRTEQGKGPARR) and 204–240 (GAAPAAGAAAPAGGAAPAAGAAPAKGGEAKGGDKAKK). Over residues 204 to 229 (GAAPAAGAAAPAGGAAPAAGAAPAKG) the composition is skewed to low complexity. Over residues 230–240 (GEAKGGDKAKK) the composition is skewed to basic and acidic residues.

It belongs to the bacterial ribosomal protein bL25 family. CTC subfamily. As to quaternary structure, part of the 50S ribosomal subunit; part of the 5S rRNA/L5/L18/L25 subcomplex. Contacts the 5S rRNA. Binds to the 5S rRNA independently of L5 and L18.

Its function is as follows. This is one of the proteins that binds to the 5S RNA in the ribosome where it forms part of the central protuberance. This chain is Large ribosomal subunit protein bL25, found in Anaeromyxobacter dehalogenans (strain 2CP-1 / ATCC BAA-258).